A 118-amino-acid chain; its full sequence is NADH-ubiquinone oxidoreductase chain 3 (118 aa).

The next 2 helical transmembrane spans lie at 7–27 (ICIYLVISPLVSLIPLGLPFL) and 87–107 (IDPFGSWSMMAFLLILTIGSL).

This sequence belongs to the complex I subunit 3 family.

The protein resides in the mitochondrion membrane. It carries out the reaction a ubiquinone + NADH + 5 H(+)(in) = a ubiquinol + NAD(+) + 4 H(+)(out). Its function is as follows. Core subunit of the mitochondrial membrane respiratory chain NADH dehydrogenase (Complex I) that is believed to belong to the minimal assembly required for catalysis. Complex I functions in the transfer of electrons from NADH to the respiratory chain. The immediate electron acceptor for the enzyme is believed to be ubiquinone. In Solanum tuberosum (Potato), this protein is NADH-ubiquinone oxidoreductase chain 3 (ND3).